The following is a 421-amino-acid chain: Forkhead box protein J1 (421 aa).

Disordered stretches follow at residues 1-34 (MAES…DSLT) and 48-116 (KAPA…DYAT). Residues 66–80 (PGSAAPGSPLAADPA) are compositionally biased toward low complexity. The segment covering 90-99 (KPTSSCTSRS) has biased composition (polar residues). Residues 120–210 (VKPPYSYATL…YAERLLSGAF (91 aa)) constitute a DNA-binding region (fork-head). A disordered region spans residues 261–302 (AGWGAGEGRLGHKRKQPLPKRVAKVPRPPSTLLPTPEEQGEL). Residues 271–284 (GHKRKQPLPKRVAK) show a composition bias toward basic residues.

This sequence belongs to the FOXJ1 family. In terms of tissue distribution, testis, oviduct, lung and brain cortex.

It is found in the nucleus. Its function is as follows. Transcription factor specifically required for the formation of motile cilia. Acts by activating transcription of genes that mediate assembly of motile cilia, such as CFAP157. Binds the DNA consensus sequences 5'-HWDTGTTTGTTTA-3' or 5'-KTTTGTTGTTKTW-3' (where H is not G, W is A or T, D is not C, and K is G or T). Activates the transcription of a variety of ciliary proteins in the developing brain and lung. This Homo sapiens (Human) protein is Forkhead box protein J1.